Here is a 499-residue protein sequence, read N- to C-terminus: Ribose import ATP-binding protein RbsA 1 (499 aa).

ABC transporter domains are found at residues Leu5–Ile240 and Thr249–Ser494. An ATP-binding site is contributed by Gly37–Ser44.

This sequence belongs to the ABC transporter superfamily. Ribose importer (TC 3.A.1.2.1) family. The complex is composed of an ATP-binding protein (RbsA), two transmembrane proteins (RbsC) and a solute-binding protein (RbsB).

Its subcellular location is the cell membrane. It catalyses the reaction D-ribose(out) + ATP + H2O = D-ribose(in) + ADP + phosphate + H(+). Functionally, part of the ABC transporter complex RbsABC involved in ribose import. Responsible for energy coupling to the transport system. In Rubrobacter xylanophilus (strain DSM 9941 / JCM 11954 / NBRC 16129 / PRD-1), this protein is Ribose import ATP-binding protein RbsA 1.